Consider the following 554-residue polypeptide: 2-succinyl-5-enolpyruvyl-6-hydroxy-3-cyclohexene-1-carboxylate synthase (554 aa).

It belongs to the TPP enzyme family. MenD subfamily. In terms of assembly, homodimer. Requires Mg(2+) as cofactor. It depends on Mn(2+) as a cofactor. Thiamine diphosphate serves as cofactor.

The enzyme catalyses isochorismate + 2-oxoglutarate + H(+) = 5-enolpyruvoyl-6-hydroxy-2-succinyl-cyclohex-3-ene-1-carboxylate + CO2. It functions in the pathway quinol/quinone metabolism; 1,4-dihydroxy-2-naphthoate biosynthesis; 1,4-dihydroxy-2-naphthoate from chorismate: step 2/7. It participates in quinol/quinone metabolism; menaquinone biosynthesis. Functionally, catalyzes the thiamine diphosphate-dependent decarboxylation of 2-oxoglutarate and the subsequent addition of the resulting succinic semialdehyde-thiamine pyrophosphate anion to isochorismate to yield 2-succinyl-5-enolpyruvyl-6-hydroxy-3-cyclohexene-1-carboxylate (SEPHCHC). The chain is 2-succinyl-5-enolpyruvyl-6-hydroxy-3-cyclohexene-1-carboxylate synthase from Renibacterium salmoninarum (strain ATCC 33209 / DSM 20767 / JCM 11484 / NBRC 15589 / NCIMB 2235).